We begin with the raw amino-acid sequence, 261 residues long: Kallikrein-1E2 (261 aa).

A signal peptide spans 1–17 (MWFLVLCLDLSLGETGA). Residues 18-24 (LPPIQSR) constitute a propeptide, activation peptide. The region spanning 25–258 (IIGGWECEKH…HLKWIKETIE (234 aa)) is the Peptidase S1 domain. Cystine bridges form between C31/C173, C50/C66, C152/C219, C184/C198, and C209/C234. Catalysis depends on H65, which acts as the Charge relay system. N79 carries an N-linked (GlcNAc...) asparagine glycan. D120 functions as the Charge relay system in the catalytic mechanism. The active-site Charge relay system is S213.

This sequence belongs to the peptidase S1 family. Kallikrein subfamily. As to expression, detected in prostate and semen.

It localises to the secreted. It catalyses the reaction Preferential cleavage of Arg-|-Xaa bonds in small molecule substrates. Highly selective action to release kallidin (lysyl-bradykinin) from kininogen involves hydrolysis of Met-|-Xaa or Leu-|-Xaa.. Glandular kallikreins cleave Met-Lys and Arg-Ser bonds in kininogen to release Lys-bradykinin. This chain is Kallikrein-1E2 (KLK1E2), found in Equus caballus (Horse).